The primary structure comprises 161 residues: uncharacterized protein (161 aa).

The protein belongs to the M.jannaschii MJ0150/MJ0739/MJ0745/MJ1460/MJ1642 family.

This is an uncharacterized protein from Methanocaldococcus jannaschii (strain ATCC 43067 / DSM 2661 / JAL-1 / JCM 10045 / NBRC 100440) (Methanococcus jannaschii).